The sequence spans 351 residues: Calcium release-activated calcium channel protein 1 (351 aa).

Polar residues predominate over residues 1–21; that stretch reads MSVWTTANNSGLETPTKSPIT. 2 disordered regions span residues 1–39 and 71–141; these read MSVW…TGNH and HAHP…EDLH. At 1–163 the chain is on the cytoplasmic side; sequence MSVWTTANNS…SRAKLKASSK (163 aa). Composition is skewed to low complexity over residues 22–33 and 80–93; these read SSVPRAARSSAV and SNSP…SNNS. A compositionally biased stretch (polar residues) spans 94-106; sequence AGFQRTSISNSLL. Residues 164–181 form a helical membrane-spanning segment; the sequence is TSALLSGFAMVAMVEVQL. Residues 182-191 lie on the Extracellular side of the membrane; the sequence is DHDTNVPPGM. A helical membrane pass occupies residues 192–212; that stretch reads LIAFAICTTLLVAVHMLALMI. Over 213-248 the chain is Cytoplasmic; it reads STCILPNIETVCNLHSISLVHESPHERLHWYIETAW. Residues 249–269 traverse the membrane as a helical segment; the sequence is AFSTLLGLILFLLEIAILCWV. The Extracellular portion of the chain corresponds to 270-277; that stretch reads KFYDLSPP. Residues 278-298 form a helical membrane-spanning segment; that stretch reads AAWSACVVLIPVMIIFMAFAI. Residues 299-351 lie on the Cytoplasmic side of the membrane; sequence HFYRSLVSHKYEVTVSGIRELEMLKEQMEQDHLEHHNNIRNNGMNYGASGDIV.

Belongs to the Orai family. As to quaternary structure, hexamer.

It is found in the cell membrane. The enzyme catalyses Ca(2+)(in) = Ca(2+)(out). Functionally, pore-forming subunit of inward rectifying Ca(2+) release-activated Ca(2+) (CRAC) channels. Assembles in hexameric CRAC channels that mediate Ca(2+) influx upon depletion of endoplasmic reticulum Ca(2+) store and channel activation by Ca(2+) sensor Stim, a process known as store-operated Ca(2+) entry (SOCE). Regulates transcription factor NFAT nuclear import. This Drosophila melanogaster (Fruit fly) protein is Calcium release-activated calcium channel protein 1.